A 90-amino-acid chain; its full sequence is Large ribosomal subunit protein bL27 (90 aa).

Residues 1–13 (MATKKSGGSSSNG) are compositionally biased toward low complexity. The tract at residues 1–20 (MATKKSGGSSSNGRDSRGRR) is disordered.

Belongs to the bacterial ribosomal protein bL27 family.

In Anaplasma marginale (strain Florida), this protein is Large ribosomal subunit protein bL27.